A 106-amino-acid chain; its full sequence is Acidic phospholipase A2 PhTX-III (106 aa).

Residues Tyr-23, Gly-25, and Gly-27 each contribute to the Ca(2+) site. 5 disulfide bridges follow: Cys-24–Cys-40, Cys-39–Cys-75, Cys-45–Cys-106, Cys-46–Cys-68, and Cys-55–Cys-66. His-43 is a catalytic residue. Ca(2+) is bound at residue Asp-44. Asp-69 is an active-site residue.

Ca(2+) is required as a cofactor. In terms of tissue distribution, expressed by the venom gland.

The protein localises to the secreted. The enzyme catalyses a 1,2-diacyl-sn-glycero-3-phosphocholine + H2O = a 1-acyl-sn-glycero-3-phosphocholine + a fatty acid + H(+). Its activity is regulated as follows. Partially inhibited by magnesium ions and completely inhibited by zinc ions These divalent cations may act as competitive antagonists of the cofactor. In terms of biological role, snake venom phospholipase A2 (PLA2) that induces inflammatory response, with local edema and release of cytokines IL-1 alpha, IL-6 and TNF-alpha. Does not exhibit myotoxic, anticoagulant and antibacterial effects. Release of pro-inflammatory cytokines may be due to mast cell degranulation, and edema may be induced by arachidonic acid that results from the PLA2 catalytic activity. PLA2 catalyzes the calcium-dependent hydrolysis of the 2-acyl groups in 3-sn-phosphoglycerides. The chain is Acidic phospholipase A2 PhTX-III from Bothrocophias hyoprora (Amazonian hognose viper).